The sequence spans 490 residues: Probable cytosol aminopeptidase (490 aa).

K262 and D267 together coordinate Mn(2+). K274 is a catalytic residue. Mn(2+) contacts are provided by D285, D344, and E346. R348 is an active-site residue.

This sequence belongs to the peptidase M17 family. Requires Mn(2+) as cofactor.

Its subcellular location is the cytoplasm. The catalysed reaction is Release of an N-terminal amino acid, Xaa-|-Yaa-, in which Xaa is preferably Leu, but may be other amino acids including Pro although not Arg or Lys, and Yaa may be Pro. Amino acid amides and methyl esters are also readily hydrolyzed, but rates on arylamides are exceedingly low.. It catalyses the reaction Release of an N-terminal amino acid, preferentially leucine, but not glutamic or aspartic acids.. Presumably involved in the processing and regular turnover of intracellular proteins. Catalyzes the removal of unsubstituted N-terminal amino acids from various peptides. This chain is Probable cytosol aminopeptidase, found in Xanthomonas axonopodis pv. citri (strain 306).